A 392-amino-acid chain; its full sequence is Probable Ni/Fe-hydrogenase 2 b-type cytochrome subunit (392 aa).

At 1–11 (MSHDPQPLGGK) the chain is on the periplasmic side. Residues 12 to 32 (IISKPVMIFGPLIVICMLLIV) traverse the membrane as a helical segment. At 33–34 (KR) the chain is on the cytoplasmic side. Residues 35 to 55 (LVFGLGSVSDLNGGFPWGVWI) traverse the membrane as a helical segment. Residues 56–58 (AFD) are Periplasmic-facing. A helical membrane pass occupies residues 59-79 (LLIGTGFACGGWALAWAVYVF). The Cytoplasmic segment spans residues 80–90 (NRGQYHPLVRP). Residues 91–111 (ALLASLFGYSLGGLSITIDVG) traverse the membrane as a helical segment. The Periplasmic segment spans residues 112-133 (RYWNLPYFYIPGHFNVNSVLFE). Residues 134–154 (TAVCMTIYIGVMALEFAPALF) traverse the membrane as a helical segment. Topologically, residues 155–168 (ERLGWKVSLQRLNK) are cytoplasmic. A helical transmembrane segment spans residues 169-189 (VMFFIIALGALLPTMHQSSMG). Residues 190 to 207 (SLMISAGYKVHPLWQSYE) lie on the Periplasmic side of the membrane. Residues 208–228 (MLPLFSLLTAFIMGFSIVIFE) traverse the membrane as a helical segment. Topologically, residues 229-249 (GSLVQAGLRGNGPDEKSLFVK) are cytoplasmic. A helical membrane pass occupies residues 250–270 (LTNTISVLLAIFIVLRFGELI). The Periplasmic segment spans residues 271–281 (YRDKLSLAFAG). The chain crosses the membrane as a helical span at residues 282–302 (DFYSVMFWIEVLLMLFPLVVL). Over 303-333 (RVAKLRNDSRMLFLSALSALLGCATWRLTYS) the chain is Cytoplasmic. A helical transmembrane segment spans residues 334–354 (LVAFNPGGGYAYFPTWEELLI). Residue serine 355 is a topological domain, periplasmic. A helical transmembrane segment spans residues 356–376 (IGFVAIEICAYIVLIRLLPIL). At 377 to 392 (PPLKQNDHNRHEASKA) the chain is on the cytoplasmic side.

Belongs to the NrfD family.

It localises to the cell inner membrane. Its function is as follows. Probable b-type cytochrome. This Escherichia coli (strain K12) protein is Probable Ni/Fe-hydrogenase 2 b-type cytochrome subunit (hybB).